We begin with the raw amino-acid sequence, 190 residues long: Heme-binding protein 1 (190 aa).

Belongs to the HEBP family. Monomer.

Its subcellular location is the cytoplasm. May bind free porphyrinogens that may be present in the cell and thus facilitate removal of these potentially toxic compound. Binds with a high affinity to one molecule of heme or porphyrins. It binds metalloporphyrins, free porphyrins and N-methylprotoporphyrin with similar affinities. This Xenopus tropicalis (Western clawed frog) protein is Heme-binding protein 1 (hebp1).